A 491-amino-acid chain; its full sequence is MAPQSGPEARSGGADFVVVANRLPIDMVRRADGTTEFKRSPGGLVTALEPLLRRRHGAWIGWPGVPEDADDPNAATEPIEQDGMTLVPVRLSSEDVAEYYEGFSNATLWPLYHDVIVKPIYHREWWDRYVDVNRRFAEATAHTAAEGATVWVQDYQLQLVPKMLRMLRPDLTIGFFLHIPFPPVELFMQMPWRTEIIEGLLGADLVGFHLPGGAQNFLILARRLIGATTSRGNVGVRSRFGEVQFGFRTVKVGAFPISIDSAELDQHARSRATRQRAKEIRAELGNPRKILLGVDRLDYTKGIDVRLRAFSELLEEGRIDPEDTVLVQLATPSRERVESYVAMREDIERQVGHVNGEFGEVGHPVLHYLHRPIPREDLVAFFVAADVMLVTPLRDGMNLVAKEYVACRHDLGGALVLSEFTGAAAELRQAYLTNPHHIEGVKDAIEAALTQAPEEGRRRMRAMRRQVLAHDVDRWARSFLDALASKEPVEG.

Arg-22 is a D-glucose 6-phosphate binding site. 42-43 (GG) lines the UDP-alpha-D-glucose pocket. D-glucose 6-phosphate contacts are provided by Tyr-100 and Asp-154. The UDP-alpha-D-glucose site is built by Arg-296 and Lys-301. Residue Arg-334 participates in D-glucose 6-phosphate binding. 399 to 403 (LVAKE) provides a ligand contact to UDP-alpha-D-glucose.

This sequence belongs to the glycosyltransferase 20 family. As to quaternary structure, homotetramer.

The catalysed reaction is ADP-alpha-D-glucose + D-glucose 6-phosphate = alpha,alpha-trehalose 6-phosphate + ADP + H(+). It carries out the reaction CDP-alpha-D-glucose + D-glucose 6-phosphate = alpha,alpha-trehalose 6-phosphate + CDP + H(+). The enzyme catalyses GDP-alpha-D-glucose + D-glucose 6-phosphate = alpha,alpha-trehalose 6-phosphate + GDP + H(+). It catalyses the reaction TDP-alpha-D-glucose + D-glucose 6-phosphate = 5-methyl-UDP + alpha,alpha-trehalose 6-phosphate + H(+). The catalysed reaction is D-glucose 6-phosphate + UDP-alpha-D-glucose = alpha,alpha-trehalose 6-phosphate + UDP + H(+). The protein operates within glycan biosynthesis; trehalose biosynthesis. In terms of biological role, probably involved in the osmoprotection via the biosynthesis of trehalose and in the production of glycogen and alpha-glucan via the TreS-Pep2 branch involved in the biosynthesis of maltose-1-phosphate (M1P). Catalyzes the transfer of glucose from UDP-glucose (UDP-Glc) to D-glucose 6-phosphate (Glc-6-P) to form trehalose-6-phosphate. Probably also able to use ADP-Glc, CDP-Glc, GDP-Glc and TDP-Glc as glucosyl donors. The polypeptide is Trehalose-6-phosphate synthase (Mycolicibacterium vanbaalenii (strain DSM 7251 / JCM 13017 / BCRC 16820 / KCTC 9966 / NRRL B-24157 / PYR-1) (Mycobacterium vanbaalenii)).